The sequence spans 327 residues: Putative D-threonate 4-phosphate dehydrogenase (327 aa).

Histidine 139 and threonine 140 together coordinate substrate. Histidine 169, histidine 213, and histidine 268 together coordinate a divalent metal cation. Substrate-binding residues include lysine 276, asparagine 285, and arginine 294.

Belongs to the PdxA family. PdxA2 subfamily. As to quaternary structure, homodimer. A divalent metal cation is required as a cofactor.

It catalyses the reaction 4-O-phospho-D-threonate + NAD(+) = dihydroxyacetone phosphate + CO2 + NADH. In terms of biological role, catalyzes the NAD-dependent oxidation and subsequent decarboxylation of D-threonate 4-phosphate to produce dihydroxyacetone phosphate (DHAP). This Salmonella typhi protein is Putative D-threonate 4-phosphate dehydrogenase.